Here is a 209-residue protein sequence, read N- to C-terminus: Small ribosomal subunit protein uS4 (209 aa).

Residues 99 to 162 (RRLDNMVYRL…RKNNKIIEAM (64 aa)) form the S4 RNA-binding domain.

This sequence belongs to the universal ribosomal protein uS4 family. In terms of assembly, part of the 30S ribosomal subunit. Contacts protein S5. The interaction surface between S4 and S5 is involved in control of translational fidelity.

One of the primary rRNA binding proteins, it binds directly to 16S rRNA where it nucleates assembly of the body of the 30S subunit. Functionally, with S5 and S12 plays an important role in translational accuracy. This chain is Small ribosomal subunit protein uS4, found in Syntrophus aciditrophicus (strain SB).